The chain runs to 74 residues: Kappa-scoloptoxin(07)-Ssm2f (74 aa).

The N-terminal stretch at 1–19 (MLVFYAILFVTVFSNTVMG) is a signal peptide. Residues 20–41 (ATIDKPIPKPIFREAIEEMEVN) constitute a propeptide that is removed on maturation.

This sequence belongs to the scoloptoxin-07 family. Contains 3 disulfide bonds. In terms of tissue distribution, expressed by the venom gland.

The protein resides in the secreted. Functionally, inhibits voltage-gated potassium channels. The chain is Kappa-scoloptoxin(07)-Ssm2f from Scolopendra mutilans (Chinese red-headed centipede).